Consider the following 671-residue polypeptide: DNA ligase (671 aa).

NAD(+) contacts are provided by residues Asp31–Asp35, Ser80–Leu81, and Glu110. Lys112 (N6-AMP-lysine intermediate) is an active-site residue. Residues Arg133, Glu167, Lys283, and Lys307 each coordinate NAD(+). Zn(2+)-binding residues include Cys401, Cys404, Cys419, and Cys424. The region spanning Glu587 to Glu671 is the BRCT domain.

Belongs to the NAD-dependent DNA ligase family. LigA subfamily. The cofactor is Mg(2+). It depends on Mn(2+) as a cofactor.

The catalysed reaction is NAD(+) + (deoxyribonucleotide)n-3'-hydroxyl + 5'-phospho-(deoxyribonucleotide)m = (deoxyribonucleotide)n+m + AMP + beta-nicotinamide D-nucleotide.. In terms of biological role, DNA ligase that catalyzes the formation of phosphodiester linkages between 5'-phosphoryl and 3'-hydroxyl groups in double-stranded DNA using NAD as a coenzyme and as the energy source for the reaction. It is essential for DNA replication and repair of damaged DNA. This is DNA ligase from Listeria innocua serovar 6a (strain ATCC BAA-680 / CLIP 11262).